The primary structure comprises 248 residues: MLAIISSAKTLNFEKLAPKTELTIPVFLTLTNKLLATLQSYSENQLSKIMNISAKLAHINKERFKDFDNQESKAAIFAYAGDVFNNIHIEKLTNHALNFLQSHLLIISGLYGVLKPLDTIKPYRLEMATKLNEINLTNFWQDEVTNYINKILAKQENKYLLNLASQEYSSVINPNKLKYQLVNVHFKENRNGKLSTIGINAKKARGAMVKVIANNLIDSPELLKNFSYLGYAFSTKHSSDNELVFIKS.

This sequence belongs to the UPF0246 family.

This is UPF0246 protein A1G_03985 from Rickettsia rickettsii (strain Sheila Smith).